The sequence spans 202 residues: Dephospho-CoA kinase (202 aa).

The DPCK domain maps to Val-4–Asn-201. Ala-12–Thr-17 is an ATP binding site.

Belongs to the CoaE family.

Its subcellular location is the cytoplasm. It carries out the reaction 3'-dephospho-CoA + ATP = ADP + CoA + H(+). It functions in the pathway cofactor biosynthesis; coenzyme A biosynthesis; CoA from (R)-pantothenate: step 5/5. Catalyzes the phosphorylation of the 3'-hydroxyl group of dephosphocoenzyme A to form coenzyme A. The chain is Dephospho-CoA kinase from Vibrio vulnificus (strain CMCP6).